A 120-amino-acid polypeptide reads, in one-letter code: UPF0231 protein YacL (120 aa).

Belongs to the UPF0231 family.

This is UPF0231 protein YacL from Escherichia coli O139:H28 (strain E24377A / ETEC).